A 448-amino-acid chain; its full sequence is Exodeoxyribonuclease 7 large subunit (448 aa).

This sequence belongs to the XseA family. In terms of assembly, heterooligomer composed of large and small subunits.

Its subcellular location is the cytoplasm. The catalysed reaction is Exonucleolytic cleavage in either 5'- to 3'- or 3'- to 5'-direction to yield nucleoside 5'-phosphates.. Functionally, bidirectionally degrades single-stranded DNA into large acid-insoluble oligonucleotides, which are then degraded further into small acid-soluble oligonucleotides. The protein is Exodeoxyribonuclease 7 large subunit of Histophilus somni (strain 129Pt) (Haemophilus somnus).